Consider the following 349-residue polypeptide: Core protein VP7 (349 aa).

N-linked (GlcNAc...) asparagine; by host glycans are attached at residues Asn-193 and Asn-287.

It belongs to the orbivirus VP7 family. In terms of assembly, homotrimer that assemble in a complex of 260 capsomers on an inner scaffold composed of VP3.

Its subcellular location is the virion. Its function is as follows. The VP7 protein is one of the five proteins (with VP1, VP3, VP4, and VP6) which form the inner capsid of the virus. In Antilocapra americana (Pronghorn), this protein is Core protein VP7 (Segment-7).